The primary structure comprises 107 residues: Putative double-stranded DNA mimic protein YE2228 (107 aa).

Belongs to the putative dsDNA mimic protein family.

May act as a double-stranded DNA (dsDNA) mimic. Probably regulates the activity of a dsDNA-binding protein. This chain is Putative double-stranded DNA mimic protein YE2228, found in Yersinia enterocolitica serotype O:8 / biotype 1B (strain NCTC 13174 / 8081).